The primary structure comprises 333 residues: Fructose-1,6-bisphosphatase class 1 (333 aa).

The Mg(2+) site is built by Glu92, Asp113, Leu115, and Asp116. Substrate is bound by residues 116 to 119 (DGSS), Asn209, Tyr242, and Lys272. Glu278 contributes to the Mg(2+) binding site.

The protein belongs to the FBPase class 1 family. Homotetramer. Requires Mg(2+) as cofactor.

It is found in the cytoplasm. The catalysed reaction is beta-D-fructose 1,6-bisphosphate + H2O = beta-D-fructose 6-phosphate + phosphate. The protein operates within carbohydrate biosynthesis; Calvin cycle. The sequence is that of Fructose-1,6-bisphosphatase class 1 from Pelodictyon phaeoclathratiforme (strain DSM 5477 / BU-1).